Here is a 670-residue protein sequence, read N- to C-terminus: Nitrate import ATP-binding protein NrtC (670 aa).

The region spanning Ile5–Asn239 is the ABC transporter domain. Gly42–Ser49 lines the ATP pocket. The tract at residues Asn255–Leu278 is linker. Positions Glu279–Gln670 are nrtA-like.

The protein belongs to the ABC transporter superfamily. Nitrate/nitrite/cyanate uptake transporter (NitT) (TC 3.A.1.16) family. In terms of assembly, the complex is composed of two ATP-binding proteins (NrtC and NrtD), two transmembrane proteins (NrtB) and a solute-binding protein (NrtA).

It is found in the cell inner membrane. The enzyme catalyses nitrate(out) + ATP + H2O = nitrate(in) + ADP + phosphate + H(+). Functionally, part of the ABC transporter complex NrtABCD involved in nitrate uptake. The complex is probably also involved in nitrite transport. Probably responsible for energy coupling to the transport system. This is Nitrate import ATP-binding protein NrtC (nrtC) from Synechocystis sp. (strain ATCC 27184 / PCC 6803 / Kazusa).